The primary structure comprises 164 residues: Anterior gradient protein 2-B (164 aa).

An N-terminal signal peptide occupies residues 1-20 (MESVLKSLFVLLVATSFTLA). 2 consecutive short sequence motifs (homodimer stabilization; interchain) follow at residues 34–43 (SRGWGDNLEW) and 49–56 (EGLYKAKA).

It belongs to the AGR family. As to quaternary structure, monomer and homodimer.

The protein resides in the secreted. It localises to the endoplasmic reticulum. This chain is Anterior gradient protein 2-B (agr2-b), found in Xenopus laevis (African clawed frog).